Here is a 481-residue protein sequence, read N- to C-terminus: MAAVNGVGLSWPSKLTKNQTPKWGFSPSHRRCNPSSSSSATIRMTASVDEKKKTFTLEKSEEAFSKAKELMPGGVNSPVRAFKSVGGQPIIIDSVKGSRMRDIDGNEYIDYVGSWGPAIIGHADDEVLAALAETMKKGTSFGAPCLLENTLAEMVISAVPSIEMVRFVNSGTEACMGVLRLARAFTCRPKIIKFEGCYHGHADPFLVKAGSGVATLGLPDSPGVPKAATIDTLTAPYNDISAVESLFEEHKGEIAAVILEPVVGNAGFIPPKLEFLAAIRKITKENDALLIFDEVMTGFRLAYGGAQEYFGITPDLTTLGKIIGGGLPVGAYGGRRDIMEMVAPAGPMYQAGTLSGNPLAMTAGIHTLKRLQGQGTYEHLDKITAELTQGILDAGKKTGHAMCGGSIRGMFGFFFADGPIYNFSDAKKSDTEKFGRFYRGMLEEGVYFAPSQFEAGFTSLAHTPEDIQRTVAAAEKVLKQI.

Positions 18 to 40 (NQTPKWGFSPSHRRCNPSSSSSA) are disordered. Lys-321 bears the N6-(pyridoxal phosphate)lysine mark.

The protein belongs to the class-III pyridoxal-phosphate-dependent aminotransferase family. HemL subfamily. In terms of assembly, homodimer. Pyridoxal 5'-phosphate is required as a cofactor.

The protein localises to the plastid. Its subcellular location is the chloroplast. It carries out the reaction (S)-4-amino-5-oxopentanoate = 5-aminolevulinate. It functions in the pathway porphyrin-containing compound metabolism; protoporphyrin-IX biosynthesis; 5-aminolevulinate from L-glutamyl-tRNA(Glu): step 2/2. The protein operates within porphyrin-containing compound metabolism; chlorophyll biosynthesis. This chain is Glutamate-1-semialdehyde 2,1-aminomutase, chloroplastic, found in Solanum lycopersicum (Tomato).